A 264-amino-acid chain; its full sequence is Small ribosomal subunit protein eS1 (264 aa).

Residue lysine 34 is modified to N6-acetyllysine; alternate. Residue lysine 34 forms a Glycyl lysine isopeptide (Lys-Gly) (interchain with G-Cter in SUMO2); alternate linkage. Lysine 56 is modified (N6-acetyllysine). An ADP-ribosyltyrosine modification is found at tyrosine 155. Residues 233–264 (GEGGSSGKAAGDETGAKVERADGYEPPVQESV) form a disordered region. A Phosphoserine modification is found at serine 237. A compositionally biased stretch (basic and acidic residues) spans 242–255 (AGDETGAKVERADG). N6-acetyllysine; alternate is present on lysine 249. A Glycyl lysine isopeptide (Lys-Gly) (interchain with G-Cter in SUMO2); alternate cross-link involves residue lysine 249. At tyrosine 256 the chain carries Phosphotyrosine. Residue serine 263 is modified to Phosphoserine.

It belongs to the eukaryotic ribosomal protein eS1 family. In terms of assembly, component of the small ribosomal subunit. Mature ribosomes consist of a small (40S) and a large (60S) subunit. The 40S subunit contains about 33 different proteins and 1 molecule of RNA (18S). The 60S subunit contains about 49 different proteins and 3 molecules of RNA (28S, 5.8S and 5S). Identified in a IGF2BP1-dependent mRNP granule complex containing untranslated mRNAs. Binds with high affinity to IPO4. Interacts with DDIT3. Part of the small subunit (SSU) processome, composed of more than 70 proteins and the RNA chaperone small nucleolar RNA (snoRNA) U3. Post-translationally, ADP-ribosylated at Tyr-155 by PARP1 in presence of HPF1.

The protein localises to the cytoplasm. Its subcellular location is the nucleus. It is found in the nucleolus. Its function is as follows. Component of the small ribosomal subunit. The ribosome is a large ribonucleoprotein complex responsible for the synthesis of proteins in the cell. Part of the small subunit (SSU) processome, first precursor of the small eukaryotic ribosomal subunit. During the assembly of the SSU processome in the nucleolus, many ribosome biogenesis factors, an RNA chaperone and ribosomal proteins associate with the nascent pre-rRNA and work in concert to generate RNA folding, modifications, rearrangements and cleavage as well as targeted degradation of pre-ribosomal RNA by the RNA exosome. May play a role during erythropoiesis through regulation of transcription factor DDIT3. This Mus musculus (Mouse) protein is Small ribosomal subunit protein eS1 (Rps3a).